Here is a 764-residue protein sequence, read N- to C-terminus: 5-methyltetrahydropteroyltriglutamate--homocysteine methyltransferase (764 aa).

5-methyltetrahydropteroyltri-L-glutamate contacts are provided by residues 16-19 (RELK) and Lys121. Residues 440–442 (IGS) and Glu493 contribute to the L-homocysteine site. Residues 440–442 (IGS) and Glu493 contribute to the L-methionine site. 5-methyltetrahydropteroyltri-L-glutamate-binding positions include 524 to 525 (RC) and Trp570. Asp608 serves as a coordination point for L-homocysteine. Position 608 (Asp608) interacts with L-methionine. 5-methyltetrahydropteroyltri-L-glutamate is bound at residue Glu614. The Zn(2+) site is built by His650, Cys652, and Glu674. His703 (proton donor) is an active-site residue. Cys735 serves as a coordination point for Zn(2+).

It belongs to the vitamin-B12 independent methionine synthase family. The cofactor is Zn(2+).

The catalysed reaction is 5-methyltetrahydropteroyltri-L-glutamate + L-homocysteine = tetrahydropteroyltri-L-glutamate + L-methionine. Its pathway is amino-acid biosynthesis; L-methionine biosynthesis via de novo pathway; L-methionine from L-homocysteine (MetE route): step 1/1. In terms of biological role, catalyzes the transfer of a methyl group from 5-methyltetrahydrofolate to homocysteine resulting in methionine formation. This is 5-methyltetrahydropteroyltriglutamate--homocysteine methyltransferase from Burkholderia ambifaria (strain ATCC BAA-244 / DSM 16087 / CCUG 44356 / LMG 19182 / AMMD) (Burkholderia cepacia (strain AMMD)).